We begin with the raw amino-acid sequence, 437 residues long: Adenylosuccinate synthetase (437 aa).

Residues 12–18 (GDEGKGK) and 40–42 (GHT) contribute to the GTP site. Asp13 acts as the Proton acceptor in catalysis. Positions 13 and 40 each coordinate Mg(2+). Residues 13–16 (DEGK), 38–41 (NAGH), Thr128, Arg142, Gln223, Thr238, and Arg302 contribute to the IMP site. His41 functions as the Proton donor in the catalytic mechanism. 298–304 (TTTGRRR) is a substrate binding site. GTP-binding positions include Arg304, 330–332 (KLD), and 412–414 (SLG).

Belongs to the adenylosuccinate synthetase family. As to quaternary structure, homodimer. It depends on Mg(2+) as a cofactor.

It localises to the cytoplasm. It carries out the reaction IMP + L-aspartate + GTP = N(6)-(1,2-dicarboxyethyl)-AMP + GDP + phosphate + 2 H(+). It functions in the pathway purine metabolism; AMP biosynthesis via de novo pathway; AMP from IMP: step 1/2. In terms of biological role, plays an important role in the de novo pathway of purine nucleotide biosynthesis. Catalyzes the first committed step in the biosynthesis of AMP from IMP. The sequence is that of Adenylosuccinate synthetase from Prochlorococcus marinus (strain MIT 9211).